Here is a 158-residue protein sequence, read N- to C-terminus: Cyclic pyranopterin monophosphate synthase (158 aa).

Substrate is bound by residues 74-76 (MCH) and 112-113 (ME). Aspartate 127 is an active-site residue.

It belongs to the MoaC family. Homohexamer; trimer of dimers.

The enzyme catalyses (8S)-3',8-cyclo-7,8-dihydroguanosine 5'-triphosphate = cyclic pyranopterin phosphate + diphosphate. It participates in cofactor biosynthesis; molybdopterin biosynthesis. Its function is as follows. Catalyzes the conversion of (8S)-3',8-cyclo-7,8-dihydroguanosine 5'-triphosphate to cyclic pyranopterin monophosphate (cPMP). The protein is Cyclic pyranopterin monophosphate synthase of Helicobacter pylori (strain ATCC 700392 / 26695) (Campylobacter pylori).